The following is an 89-amino-acid chain: Small ribosomal subunit protein uS15 (89 aa).

The protein belongs to the universal ribosomal protein uS15 family. Part of the 30S ribosomal subunit. Forms a bridge to the 50S subunit in the 70S ribosome, contacting the 23S rRNA.

In terms of biological role, one of the primary rRNA binding proteins, it binds directly to 16S rRNA where it helps nucleate assembly of the platform of the 30S subunit by binding and bridging several RNA helices of the 16S rRNA. Forms an intersubunit bridge (bridge B4) with the 23S rRNA of the 50S subunit in the ribosome. The protein is Small ribosomal subunit protein uS15 of Lactobacillus helveticus (strain DPC 4571).